Here is a 442-residue protein sequence, read N- to C-terminus: Probable carboxypeptidase PADG_04062 (442 aa).

Residues 1 to 20 (MKLQYLVALLSVQAVPPVTA) form the signal peptide. N102 carries an N-linked (GlcNAc...) asparagine glycan. D160 is a binding site for Zn(2+). The Proton acceptor role is filled by E192. Position 193 (E193) interacts with Zn(2+). N343 carries N-linked (GlcNAc...) asparagine glycosylation.

The protein belongs to the peptidase M20A family. It depends on Zn(2+) as a cofactor.

The protein resides in the secreted. The sequence is that of Probable carboxypeptidase PADG_04062 from Paracoccidioides brasiliensis (strain Pb18).